Here is a 143-residue protein sequence, read N- to C-terminus: MRVLVQRVCSAAVTVDGDVVGAVRPPGQGLLAFVGVTHGDDGDKARRLAEKLWYLRILTDEKSASDLGAPILVVSQFTLYADTVKGRRPSWNAAAPRAVAEPLVAAFAEALRALGAHVEAGVFGAHMQVELINDGPVTVMLEL.

The short motif at 135–136 (GP) is the Gly-cisPro motif, important for rejection of L-amino acids element.

This sequence belongs to the DTD family. In terms of assembly, homodimer.

It localises to the cytoplasm. The catalysed reaction is glycyl-tRNA(Ala) + H2O = tRNA(Ala) + glycine + H(+). It carries out the reaction a D-aminoacyl-tRNA + H2O = a tRNA + a D-alpha-amino acid + H(+). An aminoacyl-tRNA editing enzyme that deacylates mischarged D-aminoacyl-tRNAs. Also deacylates mischarged glycyl-tRNA(Ala), protecting cells against glycine mischarging by AlaRS. Acts via tRNA-based rather than protein-based catalysis; rejects L-amino acids rather than detecting D-amino acids in the active site. By recycling D-aminoacyl-tRNA to D-amino acids and free tRNA molecules, this enzyme counteracts the toxicity associated with the formation of D-aminoacyl-tRNA entities in vivo and helps enforce protein L-homochirality. The protein is D-aminoacyl-tRNA deacylase of Mycobacterium marinum (strain ATCC BAA-535 / M).